Consider the following 772-residue polypeptide: RNA exonuclease 5 (772 aa).

Over residues 1–10 (MEPEREGTER) the composition is skewed to basic and acidic residues. Residues 1–26 (MEPEREGTERHPRKVRKRRQAPNKLV) are disordered. The span at 11-21 (HPRKVRKRRQA) shows a compositional bias: basic residues. Residues 228-376 (LFGLDCEMCL…EDARIILELA (149 aa)) form the Exonuclease domain. 2 RRM domains span residues 505-579 (STVY…RPVT) and 600-679 (GSIY…RHLH).

This Macaca fascicularis (Crab-eating macaque) protein is RNA exonuclease 5 (REXO5).